Consider the following 520-residue polypeptide: Acetyltransferase MAT1 (520 aa).

Residues histidine 183 and aspartate 456 each act as proton acceptor in the active site.

It belongs to the plant acyltransferase family.

The protein operates within secondary metabolite biosynthesis. Its function is as follows. Acyl-CoA-dependent acyltransferase; part of the gene cluster that mediates the biosynthesis of mannosylerythritol lipids (MELs), surface-active substances that enhance the availability of water-insoluble substrates. Depending on the number of acetyl groups, mannosylerythritol lipids can be differentiated into MEL A (fully acetylated), MEL B and MEL C (monoacetylated at R-6 and R-4, respectively), and the fully deacetylated MEL D. The first step in the pathway is the generation of mannosylerythritol by the glycosyltransferase EMT1 which catalyzes the transfer of GDP-mannose to the C-4 atom of meso-erythritol. This reaction has to be stereospecific, since only mannosyl-D-erythritol is generated. The produced disaccharide is subsequently acylated with fatty acids of various lengths by the acyltransferases MAC1 and MAC2 at positions C-2 and C-3, repectively. The existence of MEL derivatives which carry an acetyl group at C-2 implies that at least MAC1 also accepts acetyl-CoA as a donor. The final step of MEL biosynthesis is the acetylation of the fully acylated mannosylerythritol lipids catalyzed by the acetyl-CoA-dependent acetyltransferase MAT1. MAT1 displays a relaxed regioselectivity and is able to transfer acetylgroups to both positions C-4 and C-6 of the mannosyl moiety. This chain is Acetyltransferase MAT1, found in Pseudozyma antarctica (strain T-34) (Yeast).